The following is a 697-amino-acid chain: Phenoloxidase 1 (697 aa).

The propeptide at Met-1–Val-101 is removed by PPAE1. Cu cation-binding residues include His-217, His-221, and His-247. N-linked (GlcNAc...) asparagine glycans are attached at residues Asn-260 and Asn-313. The active-site Proton acceptor is Glu-355. His-370, His-374, and His-410 together coordinate Cu cation. Residues Asn-498 and Asn-552 are each glycosylated (N-linked (GlcNAc...) asparagine). Cystine bridges form between Cys-587/Cys-631 and Cys-589/Cys-638.

The protein belongs to the tyrosinase family. In terms of assembly, heterodimer. The cofactor is Cu(2+). Post-translationally, activated by the cleavage of the N-terminal propeptide by PPAE1. Expressed in hemocytes.

It localises to the secreted. The enzyme catalyses L-tyrosine + O2 = L-dopaquinone + H2O. It catalyses the reaction 2 L-dopa + O2 = 2 L-dopaquinone + 2 H2O. With respect to regulation, activated by a cationic detergent cetyl pyridinium chloride (CPC). Inhibited by phenyl thio-urea (PTU). Its function is as follows. This is a copper-containing oxidase that functions in the formation of pigments such as melanins and other polyphenolic compounds. Catalyzes the rate-limiting conversions of tyrosine to DOPA, DOPA to DOPA-quinone and possibly 5,6 dihydroxyindole to indole-5'6 quinone. Catalyzes the oxidation of 4-methylcatechol. Binds to the surface of hemocytes and is involved in hemocyte melanization. In Spodoptera litura (Asian cotton leafworm), this protein is Phenoloxidase 1.